A 376-amino-acid chain; its full sequence is Hydroxylysine kinase (376 aa).

Catalysis depends on aspartate 229, which acts as the Proton acceptor.

The protein belongs to the aminoglycoside phosphotransferase family.

Its subcellular location is the cytoplasm. It catalyses the reaction (5R)-5-hydroxy-L-lysine + GTP = (5R)-5-phosphooxy-L-lysine + GDP + H(+). Catalyzes the GTP-dependent phosphorylation of 5-hydroxy-L-lysine. This Bos taurus (Bovine) protein is Hydroxylysine kinase (HYKK).